We begin with the raw amino-acid sequence, 464 residues long: Argininosuccinate lyase (464 aa).

Belongs to the lyase 1 family. Argininosuccinate lyase subfamily.

It is found in the cytoplasm. It carries out the reaction 2-(N(omega)-L-arginino)succinate = fumarate + L-arginine. It participates in amino-acid biosynthesis; L-arginine biosynthesis; L-arginine from L-ornithine and carbamoyl phosphate: step 3/3. Strongly inhibited by L-arginine. Inhibitory effects are lowered at pH 7.0 compared to those at pH 8.0. At 37 degrees Celsius and pH 7.5, activity decreases to 73% and 31% in the presence of 1 mM and 10 mM arginine, respectively. Activity also decreases to 84%, 93%, 82% and 85% in the presence of 10 mM sodium citrate, citrulline, asparatate and glutamate, respectively. Activity decreases to 96% in presence of 1 mM L-lysine. In terms of biological role, catalyzes the last step of arginine biosynthesis, the conversion of argininosuccinate into L-arginine and fumarate. This chain is Argininosuccinate lyase, found in Arthrospira platensis (strain NIES-39 / UTEX 3086 / IAM M-135) (Spirulina platensis).